Consider the following 524-residue polypeptide: GMP synthase [glutamine-hydrolyzing] (524 aa).

The 199-residue stretch at 9-207 (RILILDFGSQ…VIHICQCIPN (199 aa)) folds into the Glutamine amidotransferase type-1 domain. C86 (nucleophile) is an active-site residue. Catalysis depends on residues H181 and E183. Residues 208 to 399 (WTTKHIIEDS…LGLPADLIYR (192 aa)) enclose the GMPS ATP-PPase domain. 235-241 (SGGVDSA) contributes to the ATP binding site.

As to quaternary structure, homodimer.

The enzyme catalyses XMP + L-glutamine + ATP + H2O = GMP + L-glutamate + AMP + diphosphate + 2 H(+). The protein operates within purine metabolism; GMP biosynthesis; GMP from XMP (L-Gln route): step 1/1. In terms of biological role, catalyzes the synthesis of GMP from XMP. The chain is GMP synthase [glutamine-hydrolyzing] from Coxiella burnetii (strain RSA 331 / Henzerling II).